Consider the following 133-residue polypeptide: Succinate dehydrogenase assembly factor 3, mitochondrial (133 aa).

The N-terminal 12 residues, 1–12, are a transit peptide targeting the mitochondrion; the sequence is MNNKLIYRSVRF.

Belongs to the complex I LYR family. SDHAF3 subfamily. In terms of assembly, interacts with SDH2 within an SDH1-SDH2 subcomplex.

The protein resides in the mitochondrion. The protein localises to the mitochondrion intermembrane space. It localises to the mitochondrion matrix. Functionally, plays an essential role in the assembly of succinate dehydrogenase (SDH), an enzyme complex (also referred to as respiratory complex II) that is a component of both the tricarboxylic acid (TCA) cycle and the mitochondrial electron transport chain, and which couples the oxidation of succinate to fumarate with the reduction of ubiquinone (coenzyme Q) to ubiquinol. Promotes maturation of the iron-sulfur protein subunit SDH2 of the SDH catalytic dimer, protecting it from the deleterious effects of oxidants. Acts together with SDHAF1 (SDH6). This Saccharomyces cerevisiae (strain ATCC 204508 / S288c) (Baker's yeast) protein is Succinate dehydrogenase assembly factor 3, mitochondrial.